A 107-amino-acid chain; its full sequence is Thioredoxin (107 aa).

Positions 2–107 constitute a Thioredoxin domain; that stretch reads SVSQVTDASF…LASTLNKYIS (106 aa). Active-site nucleophile residues include C31 and C34. The cysteines at positions 31 and 34 are disulfide-linked.

It belongs to the thioredoxin family.

It localises to the plastid. It is found in the chloroplast. In terms of biological role, participates in various redox reactions through the reversible oxidation of its active center dithiol to a disulfide and catalyzes dithiol-disulfide exchange reactions. In Pyropia yezoensis (Susabi-nori), this protein is Thioredoxin (trxA).